Reading from the N-terminus, the 448-residue chain is Cysteine--tRNA ligase (448 aa).

A Zn(2+)-binding site is contributed by C29. The 'HIGH' region motif lies at 31-41 (PTVYDTAHIGN). Residues 79-91 (ATTGADRGADQAH) show a composition bias toward basic and acidic residues. Positions 79–106 (ATTGADRGADQAHRGPLPRRHGPLNAAP) are disordered. The Zn(2+) site is built by C206 and E235. The short motif at 265 to 269 (RMSKS) is the 'KMSKS' region element. Residue K268 coordinates ATP.

This sequence belongs to the class-I aminoacyl-tRNA synthetase family. In terms of assembly, monomer. Requires Zn(2+) as cofactor.

The protein localises to the cytoplasm. It catalyses the reaction tRNA(Cys) + L-cysteine + ATP = L-cysteinyl-tRNA(Cys) + AMP + diphosphate. This Azospirillum brasilense protein is Cysteine--tRNA ligase (cysS).